The chain runs to 156 residues: MDIQTFDHTKEENPKNLELITDILEFAGNYLHLDEETEISVTLMHNDEIHQINKEYRNVDRPTDVISFAINDADEDIIMDPEMAEEIPANIGDLMISVDKVAEQAEFLGHSYERELGFLCVHGFLHLNGYDHMEKEDQEKMFPLQKEIMNAYGLKR.

Residues histidine 122, histidine 126, and histidine 132 each contribute to the Zn(2+) site.

The protein belongs to the endoribonuclease YbeY family. Zn(2+) serves as cofactor.

It localises to the cytoplasm. Functionally, single strand-specific metallo-endoribonuclease involved in late-stage 70S ribosome quality control and in maturation of the 3' terminus of the 16S rRNA. The protein is Endoribonuclease YbeY of Pediococcus pentosaceus (strain ATCC 25745 / CCUG 21536 / LMG 10740 / 183-1w).